The primary structure comprises 355 residues: N5-carboxyaminoimidazole ribonucleotide synthase (355 aa).

Residues Arg80, Lys120, 125–131 (GYDGRGQ), 153–156 (EQGI), Glu161, His184, and 237–238 (NE) contribute to the ATP site. The ATP-grasp domain maps to 84 to 267 (KQLFDKLHLP…QFELHLRAIT (184 aa)).

The protein belongs to the PurK/PurT family. In terms of assembly, homodimer.

It catalyses the reaction 5-amino-1-(5-phospho-beta-D-ribosyl)imidazole + hydrogencarbonate + ATP = 5-carboxyamino-1-(5-phospho-D-ribosyl)imidazole + ADP + phosphate + 2 H(+). It participates in purine metabolism; IMP biosynthesis via de novo pathway; 5-amino-1-(5-phospho-D-ribosyl)imidazole-4-carboxylate from 5-amino-1-(5-phospho-D-ribosyl)imidazole (N5-CAIR route): step 1/2. Functionally, catalyzes the ATP-dependent conversion of 5-aminoimidazole ribonucleotide (AIR) and HCO(3)(-) to N5-carboxyaminoimidazole ribonucleotide (N5-CAIR). In Escherichia coli (strain K12), this protein is N5-carboxyaminoimidazole ribonucleotide synthase.